The primary structure comprises 252 residues: Redox-sensing transcriptional repressor Rex (252 aa).

The H-T-H motif DNA-binding region spans 26 to 65; it reads LYLRALTALSERSVPTVSSEELAAAAGVNSAKLRKDFSYL. 100 to 105 contacts NAD(+); sequence GIGNLG. Residues 222–252 form a disordered region; the sequence is EAAAEGAIPAAASKESADKGPDGDVPAVMPA.

The protein belongs to the transcriptional regulatory Rex family. Homodimer.

It is found in the cytoplasm. Modulates transcription in response to changes in cellular NADH/NAD(+) redox state. This is Redox-sensing transcriptional repressor Rex from Streptomyces avermitilis (strain ATCC 31267 / DSM 46492 / JCM 5070 / NBRC 14893 / NCIMB 12804 / NRRL 8165 / MA-4680).